An 85-amino-acid polypeptide reads, in one-letter code: ATP synthase subunit c (85 aa).

The next 2 membrane-spanning stretches (helical) occupy residues 10-30 and 53-73; these read IAVA…FAVL and FIIA…ALLF.

The protein belongs to the ATPase C chain family. As to quaternary structure, F-type ATPases have 2 components, F(1) - the catalytic core - and F(0) - the membrane proton channel. F(1) has five subunits: alpha(3), beta(3), gamma(1), delta(1), epsilon(1). F(0) has three main subunits: a(1), b(2) and c(10-14). The alpha and beta chains form an alternating ring which encloses part of the gamma chain. F(1) is attached to F(0) by a central stalk formed by the gamma and epsilon chains, while a peripheral stalk is formed by the delta and b chains.

Its subcellular location is the cell inner membrane. In terms of biological role, f(1)F(0) ATP synthase produces ATP from ADP in the presence of a proton or sodium gradient. F-type ATPases consist of two structural domains, F(1) containing the extramembraneous catalytic core and F(0) containing the membrane proton channel, linked together by a central stalk and a peripheral stalk. During catalysis, ATP synthesis in the catalytic domain of F(1) is coupled via a rotary mechanism of the central stalk subunits to proton translocation. Key component of the F(0) channel; it plays a direct role in translocation across the membrane. A homomeric c-ring of between 10-14 subunits forms the central stalk rotor element with the F(1) delta and epsilon subunits. This is ATP synthase subunit c from Vibrio vulnificus (strain CMCP6).